The following is a 580-amino-acid chain: 2-succinyl-5-enolpyruvyl-6-hydroxy-3-cyclohexene-1-carboxylate synthase (580 aa).

Belongs to the TPP enzyme family. MenD subfamily. Homodimer. Mg(2+) serves as cofactor. The cofactor is Mn(2+). Requires thiamine diphosphate as cofactor.

The enzyme catalyses isochorismate + 2-oxoglutarate + H(+) = 5-enolpyruvoyl-6-hydroxy-2-succinyl-cyclohex-3-ene-1-carboxylate + CO2. It functions in the pathway quinol/quinone metabolism; 1,4-dihydroxy-2-naphthoate biosynthesis; 1,4-dihydroxy-2-naphthoate from chorismate: step 2/7. Its pathway is quinol/quinone metabolism; menaquinone biosynthesis. Catalyzes the thiamine diphosphate-dependent decarboxylation of 2-oxoglutarate and the subsequent addition of the resulting succinic semialdehyde-thiamine pyrophosphate anion to isochorismate to yield 2-succinyl-5-enolpyruvyl-6-hydroxy-3-cyclohexene-1-carboxylate (SEPHCHC). This Listeria monocytogenes serotype 4b (strain F2365) protein is 2-succinyl-5-enolpyruvyl-6-hydroxy-3-cyclohexene-1-carboxylate synthase.